The chain runs to 466 residues: Gamma-aminobutyric acid receptor subunit gamma-2 (466 aa).

A signal peptide spans 1-38 (MSSPNTWSTGSTVYSPVFSQKMTLWILLLLSLYPGFTS). The Extracellular portion of the chain corresponds to 39–274 (QKSDDDYEDY…FDLSRRMGYF (236 aa)). N-linked (GlcNAc...) asparagine glycosylation is found at asparagine 51 and asparagine 128. A disulfide bridge connects residues cysteine 189 and cysteine 203. An N-linked (GlcNAc...) asparagine glycan is attached at asparagine 246. A helical membrane pass occupies residues 275 to 295 (TIQTYIPCTLIVVLSWVSFWI). The Cytoplasmic portion of the chain corresponds to 296–301 (NKDAVP). The chain crosses the membrane as a helical span at residues 302–321 (ARTSLGITTVLTMTTLSTIA). Residues 322 to 333 (RKSLPKVSYVTA) lie on the Extracellular side of the membrane. The helical transmembrane segment at 334–358 (MDLFVSVCFIFVFSALVEYGTLHYF) threads the bilayer. Over 359–442 (VSNRKPSKDK…IHIRIAKMDS (84 aa)) the chain is Cytoplasmic. A helical membrane pass occupies residues 443-463 (YARIFFPTAFCLFNLVYWVSY). The Extracellular portion of the chain corresponds to 464–466 (LYL).

Belongs to the ligand-gated ion channel (TC 1.A.9) family. Gamma-aminobutyric acid receptor (TC 1.A.9.5) subfamily. GABRG2 sub-subfamily. Heteropentamer, formed by a combination of alpha (GABRA1-6), beta (GABRB1-3), gamma (GABRG1-3), delta (GABRD), epsilon (GABRE), rho (GABRR1-3), pi (GABRP) and theta (GABRQ) chains, each subunit exhibiting distinct physiological and pharmacological properties. Interacts with GABARAP. Interacts with KIF21B. Identified in a complex of 720 kDa composed of LHFPL4, NLGN2, GABRA1, GABRB2, GABRG2 and GABRB3. Interacts with LHFPL4. Interacts with SHISA7; interaction leads to the regulation of GABA(A) receptor trafficking, channel deactivation kinetics and pharmacology. Post-translationally, palmitoylated by ZDHHC3/GODZ; required for the accumulation of GABA(A) receptors at the postsynaptic membrane of inhibitory GABAergic synapses. Glycosylated. Expressed in brain (at protein level). Expressed in lungs, in alveolar epithelium.

The protein localises to the postsynaptic cell membrane. It is found in the cell membrane. It localises to the cell projection. Its subcellular location is the dendrite. The protein resides in the cytoplasmic vesicle membrane. The catalysed reaction is chloride(in) = chloride(out). With respect to regulation, allosterically activated by benzodiazepines. Activated by pentobarbital. Inhibited by the antagonist bicuculline. Inhibited by zinc ions. Potentiated by histamine. Functionally, gamma subunit of the heteropentameric ligand-gated chloride channel gated by gamma-aminobutyric acid (GABA), a major inhibitory neurotransmitter in the brain. GABA-gated chloride channels, also named GABA(A) receptors (GABAAR), consist of five subunits arranged around a central pore and contain GABA active binding site(s) located at the alpha and beta subunit interface(s). When activated by GABA, GABAARs selectively allow the flow of chloride anions across the cell membrane down their electrochemical gradient. Gamma-2/GABRG2-containing GABAARs are found at both synaptic and extrasynaptic sites. Chloride influx into the postsynaptic neuron following GABAAR opening decreases the neuron ability to generate a new action potential, thereby reducing nerve transmission. GABAARs containing alpha-1 and beta-2 or -3 subunits exhibit synaptogenic activity; the gamma-2 subunit being necessary but not sufficient to induce rapid synaptic contacts formation. Extrasynaptic gamma-2-containing receptors contribute to the tonic GABAergic inhibition. GABAARs function also as histamine receptor where histamine binds at the interface of two neighboring beta subunits and potentiates GABA response in a gamma-2 subunit-controlled manner. The chain is Gamma-aminobutyric acid receptor subunit gamma-2 from Rattus norvegicus (Rat).